Here is a 100-residue protein sequence, read N- to C-terminus: Urease subunit gamma (100 aa).

It belongs to the urease gamma subunit family. Heterotrimer of UreA (gamma), UreB (beta) and UreC (alpha) subunits. Three heterotrimers associate to form the active enzyme.

The protein resides in the cytoplasm. It carries out the reaction urea + 2 H2O + H(+) = hydrogencarbonate + 2 NH4(+). It functions in the pathway nitrogen metabolism; urea degradation; CO(2) and NH(3) from urea (urease route): step 1/1. The chain is Urease subunit gamma from Prochlorococcus marinus (strain AS9601).